Consider the following 516-residue polypeptide: Putative sel1-like repeat-containing protein R850 (516 aa).

Sel1-like repeat units follow at residues 103–138 and 230–265; these read ALTY…NMNS and SISQ…KQGD.

The polypeptide is Putative sel1-like repeat-containing protein R850 (Acanthamoeba polyphaga (Amoeba)).